The chain runs to 334 residues: Transcription factor TGA2.1 (334 aa).

A compositionally biased stretch (polar residues) spans 1-13 (MADASSRTDTSIV). Positions 1–49 (MADASSRTDTSIVVDNDDKNHQLENGHSGAVMASNSSDRSDRSDKLMDQ) are disordered. Residues 38-49 (DRSDRSDKLMDQ) show a composition bias toward basic and acidic residues. A bZIP domain is found at 48 to 92 (DQKTIRRLAQNREAARKSRLRKKAYVQQLESSKLKLAQLEQELQK). The segment at 50–70 (KTIRRLAQNREAARKSRLRKK) is basic motif. The interval 76–90 (LESSKLKLAQLEQEL) is leucine-zipper. The DOG1 domain occupies 115-331 (ALTFDLEYTR…RALSSLWLAR (217 aa)).

It belongs to the bZIP family. In terms of assembly, interacts with NPR1/NH1 and NPR3/NH3.

The protein resides in the nucleus. In terms of biological role, plays a negative role in rice basal defense responses to the bacterial blight pathogen Xanthomomas oryzae pv. oryzae (Xoo). May function in both positive and negative regulation of rice defense genes. Binds DNA in vitro. Acts as a transcriptional activator when bound to NPR1/NH1 in vitro. Binds to the promoter sequence of CRK10 in vitro. In Oryza sativa subsp. japonica (Rice), this protein is Transcription factor TGA2.1.